A 222-amino-acid chain; its full sequence is Charged multivesicular body protein 3 (222 aa).

Residue Gly-2 is the site of N-myristoyl glycine attachment. Positions 2–113 (GLFGKTQEKP…LQKSTEVMKA (112 aa)) are intramolecular interaction with C-terminus. Residues 22–54 (KIRKEMRVVDRQIRDIQREEEKVKRSVKDAAKK) are a coiled coil. Important for autoinhibitory function stretches follow at residues 59 to 64 (VCIVLA) and 168 to 169 (IL). Positions 141–222 (EEMLEDTFES…MQSRLATLRS (82 aa)) form a coiled coil. The segment at 151-220 (MDDQEEMEEE…EAMQSRLATL (70 aa)) is intramolecular interaction with N-terminus. The segment at 151–222 (MDDQEEMEEE…MQSRLATLRS (72 aa)) is interaction with VPS4A. Lys-179 participates in a covalent cross-link: Glycyl lysine isopeptide (Lys-Gly) (interchain with G-Cter in ubiquitin). The segment at 180–222 (APSKVTDALPEPEPPGAMAASEDEEEEEEALEAMQSRLATLRS) is disordered. Ser-200 carries the post-translational modification Phosphoserine. A compositionally biased stretch (acidic residues) spans 200-210 (SEDEEEEEEAL). The short motif at 201-211 (EDEEEEEEALE) is the MIT-interacting motif element. Interaction with STAMBP stretches follow at residues 203–207 (EEEEE) and 221–222 (RS).

The protein belongs to the SNF7 family. In terms of assembly, probable core component of the endosomal sorting required for transport complex III (ESCRT-III). ESCRT-III components are thought to multimerize to form a flat lattice on the perimeter membrane of the endosome. Several assembly forms of ESCRT-III may exist that interact and act sequentially. Forms a metastable monomer in solution; its core structure (without part of the putative autoinhibitory C-terminal acidic region) oligomerizes into a flat lattice via two different dimerization interfaces. In vitro, heteromerizes with CHMP2A (but not CHMP4) to form helical tubular structures that expose membrane-interacting sites on the outside whereas VPS4B can associate on the inside of the tubule. May interact with IGFBP7; the relevance of such interaction however remains unclear. Interacts with CHMP2A. Interacts with CHMP4A; the interaction requires the release of CHMP4A autoinhibition. Interacts with VPS4A. Interacts with STAMBP; the interaction appears to relieve the autoinhibition of CHMP3. Interacts with VTA1. Widely expressed. Expressed in heart, brain, placenta, lung, liver, skeletal muscle, kidney and pancreas.

The protein localises to the cytoplasm. The protein resides in the cytosol. It localises to the membrane. Its subcellular location is the endosome. It is found in the late endosome membrane. In terms of biological role, probable core component of the endosomal sorting required for transport complex III (ESCRT-III) which is involved in multivesicular bodies (MVBs) formation and sorting of endosomal cargo proteins into MVBs. MVBs contain intraluminal vesicles (ILVs) that are generated by invagination and scission from the limiting membrane of the endosome and mostly are delivered to lysosomes enabling degradation of membrane proteins, such as stimulated growth factor receptors, lysosomal enzymes and lipids. The MVB pathway appears to require the sequential function of ESCRT-O, -I,-II and -III complexes. ESCRT-III proteins mostly dissociate from the invaginating membrane before the ILV is released. The ESCRT machinery also functions in topologically equivalent membrane fission events, such as the terminal stages of cytokinesis and the budding of enveloped viruses (HIV-1 and other lentiviruses). ESCRT-III proteins are believed to mediate the necessary vesicle extrusion and/or membrane fission activities, possibly in conjunction with the AAA ATPase VPS4. Selectively binds to phosphatidylinositol 3,5-bisphosphate PtdIns(3,5)P2 and PtdIns(3,4)P2 in preference to other phosphoinositides tested. Involved in late stages of cytokinesis. Plays a role in endosomal sorting/trafficking of EGF receptor. Isoform 2 prevents stress-mediated cell death and accumulation of reactive oxygen species when expressed in yeast cells. The chain is Charged multivesicular body protein 3 (CHMP3) from Homo sapiens (Human).